The sequence spans 992 residues: Presequence protease, mitochondrial (992 aa).

Residues 1-30 (MNYAKLSIAFSKKTIKTHNCRLFQRWLHVG) constitute a mitochondrion transit peptide. His-91 contacts Zn(2+). Residue Glu-94 is the Proton acceptor of the active site. Residue His-95 participates in Zn(2+) binding. Residue Glu-167 is part of the active site. Glu-192 lines the Zn(2+) pocket.

It belongs to the peptidase M16 family. PreP subfamily. In terms of assembly, monomer and homodimer; homodimerization is induced by binding of the substrate. The cofactor is Zn(2+).

It localises to the mitochondrion intermembrane space. The protein localises to the mitochondrion matrix. Its function is as follows. Degrades mitochondrial transit peptides after their cleavage in the intermembrane space or in the matrix, and presequence peptides; clearance of these peptides is required to keep the presequence processing machinery running. Preferentially cleaves the N-terminal side of paired basic amino acid residues. Also degrades other unstructured peptides. May function as an ATP-dependent peptidase as opposed to a metalloendopeptidase. The sequence is that of Presequence protease, mitochondrial (cym1) from Schizosaccharomyces pombe (strain 972 / ATCC 24843) (Fission yeast).